Reading from the N-terminus, the 351-residue chain is Glycerol-3-phosphate dehydrogenase 1-like protein (351 aa).

Residue 12 to 17 (GSGNWG) coordinates NAD(+). Lysine 122 provides a ligand contact to substrate. Alanine 155 lines the NAD(+) pocket. Residue lysine 206 is the Proton acceptor of the active site. NAD(+) contacts are provided by arginine 271, lysine 298, and glutamine 300. 271–272 (RN) contacts substrate.

This sequence belongs to the NAD-dependent glycerol-3-phosphate dehydrogenase family. In terms of assembly, interacts with SCN5A. Most highly expressed in heart tissue, with lower levels in the skeletal muscle, kidney, lung and other organs.

It is found in the cytoplasm. The catalysed reaction is sn-glycerol 3-phosphate + NAD(+) = dihydroxyacetone phosphate + NADH + H(+). In terms of biological role, plays a role in regulating cardiac sodium current; decreased enzymatic activity with resulting increased levels of glycerol 3-phosphate activating the DPD1L-dependent SCN5A phosphorylation pathway, may ultimately lead to decreased sodium current; cardiac sodium current may also be reduced due to alterations of NAD(H) balance induced by DPD1L. The chain is Glycerol-3-phosphate dehydrogenase 1-like protein from Homo sapiens (Human).